Here is an 882-residue protein sequence, read N- to C-terminus: MKQLTSSQVRQMFLDFFKEHGHMVMQSASLIPQDDPTLLWINSGVATMKKYFDGSVVPKNHRITSSQKSIRTNDIENVGKTARHQTFFEMLGNFSVGDYFKKEVIPWAWEFLTSPKWLGLDPDKLYVTVYPKDTEAYHMWHDVVGLPEDHIVKLEDNFWDIGEGPCGPDSEIFYDRGQENNDVAEDDPENFPGGENARYLEIWNIVFSQFNHLPNGKYVDQPHKNIDTGMGLERVVSIIQDAPTNFETDLFMPIIKETEKLSDGKKYAANKEDDVAFKIIADHVRAVSFAIADGALPSNSGRGYVLRRLIRRADLNGQRLGIKGAFLYKLVPVVGEIMKSHYPEVVDQQAFIQKVIKNEEERFQVTLSSGLNLLDNIIAEAKKSDDKTISGKDAFKLFDTYGFPYELTFEAAQDAGLKIDKKGFDEEMKAQKERARKARGNLQSMGSQDVTLMNIKDKSEFEYGTLEEKHAKLIDIVVDDKLVDKADGEHATLIFDKTPFYAERGGQVADHGEILNQNGELVARVTDVQHAPNDQNLHFVDVILPLEKGQEYVLKVDQKRRRGLKHNHTATHLLHAALREVLGTHTHQAGSLVEPDYLRFDFTSLEPMTKKEIASVEKLVNEKIWEEIPVKTTVTDPDTGLKMGALALFGEKYGDTVRVVQIDDFSTEFCGGTHCENTDQIGMLKIVSESAVGAGTRRIIAVTGPEAYKYVTDRDEILKEVQDEVKATKAEDVVNKISSIEDDLRASQKEAEQLKAQINKAKAGDLFNDIKQVKDLTVIAAQADVEGMNDLRELADNWKSSNKSDVLVLAAEVNGKANMVISLDDKAIKAGLKAGDLIKTAAPIFGGGGGGRPNMAQAGGKNPAGLKDAIAKVLQEVEEKQN.

Histidine 568, histidine 572, cysteine 670, and histidine 674 together coordinate Zn(2+).

Belongs to the class-II aminoacyl-tRNA synthetase family. Zn(2+) is required as a cofactor.

Its subcellular location is the cytoplasm. It catalyses the reaction tRNA(Ala) + L-alanine + ATP = L-alanyl-tRNA(Ala) + AMP + diphosphate. In terms of biological role, catalyzes the attachment of alanine to tRNA(Ala) in a two-step reaction: alanine is first activated by ATP to form Ala-AMP and then transferred to the acceptor end of tRNA(Ala). Also edits incorrectly charged Ser-tRNA(Ala) and Gly-tRNA(Ala) via its editing domain. This is Alanine--tRNA ligase from Lactobacillus johnsonii (strain CNCM I-12250 / La1 / NCC 533).